Reading from the N-terminus, the 73-residue chain is NADH dehydrogenase [ubiquinone] 1 beta subcomplex subunit 3-B (73 aa).

The chain crosses the membrane as a helical span at residues 31 to 48 (ALPGLGIGVAAFCVYLVG).

Belongs to the complex I NDUFB3 subunit family. Complex I is composed of at least 49 different subunits.

Its subcellular location is the mitochondrion inner membrane. Functionally, accessory subunit of the mitochondrial membrane respiratory chain NADH dehydrogenase (Complex I), that is believed not to be involved in catalysis. Complex I functions in the transfer of electrons from NADH to the respiratory chain. The immediate electron acceptor for the enzyme is believed to be ubiquinone. The polypeptide is NADH dehydrogenase [ubiquinone] 1 beta subcomplex subunit 3-B (Arabidopsis thaliana (Mouse-ear cress)).